The sequence spans 202 residues: Small ribosomal subunit protein uS4c (202 aa).

Residues 90 to 153 form the S4 RNA-binding domain; the sequence is MRLDNIIFRL…KSEAIISKNI (64 aa).

The protein belongs to the universal ribosomal protein uS4 family. As to quaternary structure, part of the 30S ribosomal subunit. Contacts protein S5. The interaction surface between S4 and S5 is involved in control of translational fidelity.

The protein localises to the plastid. Its subcellular location is the chloroplast. Its function is as follows. One of the primary rRNA binding proteins, it binds directly to 16S rRNA where it nucleates assembly of the body of the 30S subunit. In terms of biological role, with S5 and S12 plays an important role in translational accuracy. This is Small ribosomal subunit protein uS4c (rps4) from Hookeria lucens (Moss).